The chain runs to 144 residues: Elicitor-responsive protein 3 (144 aa).

One can recognise a C2 domain in the interval 1–103 (MVQGTLEVLL…YTEGSIPPTV (103 aa)). Ca(2+) contacts are provided by D20, D26, D73, D75, and D81. The tract at residues 123–144 (TPEDDRDRGLSEEDIGGWKQSS) is disordered.

Ca(2+) serves as cofactor.

The protein is Elicitor-responsive protein 3 (ERG3) of Oryza sativa subsp. indica (Rice).